The primary structure comprises 540 residues: uncharacterized protein (540 aa).

A signal peptide spans 1–20 (MSVSYRGPRWSSFVHVSQHS).

It belongs to the TP096X family.

This is an uncharacterized protein from Treponema pallidum (strain Nichols).